Consider the following 264-residue polypeptide: Elongation factor Ts (264 aa).

The interval 76 to 79 (TDFV) is involved in Mg(2+) ion dislocation from EF-Tu.

Belongs to the EF-Ts family.

It localises to the cytoplasm. Associates with the EF-Tu.GDP complex and induces the exchange of GDP to GTP. It remains bound to the aminoacyl-tRNA.EF-Tu.GTP complex up to the GTP hydrolysis stage on the ribosome. The polypeptide is Elongation factor Ts (Deinococcus deserti (strain DSM 17065 / CIP 109153 / LMG 22923 / VCD115)).